The following is a 481-amino-acid chain: Small ribosomal subunit protein bS1 (481 aa).

4 S1 motif domains span residues 36 to 105 (GDIV…LSKK), 123 to 188 (DEAV…LSRR), 209 to 277 (GAIR…LSLK), and 294 to 363 (GQIV…LSLK). Positions 437–465 (ATEEAGHGSSEQPPASSTPSAKATGGSLA) are disordered. Positions 445–457 (SSEQPPASSTPSA) are enriched in polar residues.

The protein belongs to the bacterial ribosomal protein bS1 family.

In terms of biological role, binds mRNA; thus facilitating recognition of the initiation point. It is needed to translate mRNA with a short Shine-Dalgarno (SD) purine-rich sequence. This is Small ribosomal subunit protein bS1 (rpsA) from Mycobacterium leprae (strain TN).